The sequence spans 379 residues: Homoserine O-succinyltransferase (379 aa).

Positions 48 to 357 (NAVLICHALS…SAHGHDAFLM (310 aa)) constitute an AB hydrolase-1 domain. Ser154 functions as the Nucleophile in the catalytic mechanism. Arg224 lines the substrate pocket. Active-site residues include Asp319 and His352. Asp353 is a binding site for substrate.

The protein belongs to the AB hydrolase superfamily. MetX family. Homodimer.

It localises to the cytoplasm. It carries out the reaction L-homoserine + succinyl-CoA = O-succinyl-L-homoserine + CoA. Its pathway is amino-acid biosynthesis; L-methionine biosynthesis via de novo pathway; O-succinyl-L-homoserine from L-homoserine: step 1/1. Transfers a succinyl group from succinyl-CoA to L-homoserine, forming succinyl-L-homoserine. The protein is Homoserine O-succinyltransferase of Neisseria meningitidis serogroup A / serotype 4A (strain DSM 15465 / Z2491).